We begin with the raw amino-acid sequence, 173 residues long: Transmembrane protein 278 (173 aa).

Positions 1–14 (MSEQERETEEDEGV) are enriched in acidic residues. Positions 1–25 (MSEQERETEEDEGVASDTAPMLPRR) are disordered. The next 3 membrane-spanning stretches (helical) occupy residues 31 to 51 (HISV…VLSG), 53 to 73 (ALVG…LVLL), and 107 to 127 (AALI…AAAA). A disordered region spans residues 141 to 165 (DPARTPAPRRPPRSSGDLADGHPDE).

This sequence belongs to the TMEM88 family.

The protein localises to the membrane. This Mus musculus (Mouse) protein is Transmembrane protein 278 (Tmem278).